Here is a 728-residue protein sequence, read N- to C-terminus: 1,4-alpha-glucan branching enzyme GlgB (728 aa).

D405 (nucleophile) is an active-site residue. Catalysis depends on E458, which acts as the Proton donor.

The protein belongs to the glycosyl hydrolase 13 family. GlgB subfamily. In terms of assembly, monomer.

The catalysed reaction is Transfers a segment of a (1-&gt;4)-alpha-D-glucan chain to a primary hydroxy group in a similar glucan chain.. Its pathway is glycan biosynthesis; glycogen biosynthesis. In terms of biological role, catalyzes the formation of the alpha-1,6-glucosidic linkages in glycogen by scission of a 1,4-alpha-linked oligosaccharide from growing alpha-1,4-glucan chains and the subsequent attachment of the oligosaccharide to the alpha-1,6 position. This chain is 1,4-alpha-glucan branching enzyme GlgB, found in Citrobacter koseri (strain ATCC BAA-895 / CDC 4225-83 / SGSC4696).